Reading from the N-terminus, the 283-residue chain is Pantothenate synthetase (283 aa).

30–37 is a binding site for ATP; sequence MGYLHEGH. Histidine 37 functions as the Proton donor in the catalytic mechanism. Glutamine 61 is a binding site for (R)-pantoate. Glutamine 61 is a binding site for beta-alanine. 147–150 contributes to the ATP binding site; that stretch reads GQKD. Residue glutamine 153 participates in (R)-pantoate binding. ATP contacts are provided by residues valine 176 and 184–187; that span reads MSSR.

This sequence belongs to the pantothenate synthetase family. In terms of assembly, homodimer.

Its subcellular location is the cytoplasm. It carries out the reaction (R)-pantoate + beta-alanine + ATP = (R)-pantothenate + AMP + diphosphate + H(+). The protein operates within cofactor biosynthesis; (R)-pantothenate biosynthesis; (R)-pantothenate from (R)-pantoate and beta-alanine: step 1/1. Its function is as follows. Catalyzes the condensation of pantoate with beta-alanine in an ATP-dependent reaction via a pantoyl-adenylate intermediate. In Thermoanaerobacter sp. (strain X514), this protein is Pantothenate synthetase.